The primary structure comprises 200 residues: Ribosomal RNA large subunit methyltransferase E (200 aa).

Residues Gly-49, Trp-51, Asp-69, Asp-87, and Asp-111 each contribute to the S-adenosyl-L-methionine site. Lys-151 (proton acceptor) is an active-site residue.

Belongs to the class I-like SAM-binding methyltransferase superfamily. RNA methyltransferase RlmE family.

The protein localises to the cytoplasm. The enzyme catalyses uridine(2552) in 23S rRNA + S-adenosyl-L-methionine = 2'-O-methyluridine(2552) in 23S rRNA + S-adenosyl-L-homocysteine + H(+). In terms of biological role, specifically methylates the uridine in position 2552 of 23S rRNA at the 2'-O position of the ribose in the fully assembled 50S ribosomal subunit. The sequence is that of Ribosomal RNA large subunit methyltransferase E from Lawsonia intracellularis (strain PHE/MN1-00).